Reading from the N-terminus, the 182-residue chain is Adenine phosphoribosyltransferase (182 aa).

An AMP-binding site is contributed by 133-137 (ATGGS).

It belongs to the purine/pyrimidine phosphoribosyltransferase family. Homodimer. Mg(2+) is required as a cofactor.

It is found in the cytoplasm. The protein localises to the nucleus. The catalysed reaction is AMP + diphosphate = 5-phospho-alpha-D-ribose 1-diphosphate + adenine. It participates in purine metabolism; AMP biosynthesis via salvage pathway; AMP from adenine: step 1/1. Functionally, catalyzes a salvage reaction resulting in the formation of AMP, that is energically less costly than de novo synthesis. The sequence is that of Adenine phosphoribosyltransferase (APT1) from Yarrowia lipolytica (strain CLIB 122 / E 150) (Yeast).